The chain runs to 282 residues: ATP synthase subunit a (282 aa).

The next 6 membrane-spanning stretches (helical) occupy residues 38-58 (VDSMFYSVLLGLLTVFLLWLA), 97-117 (FVAPLALTVFVWIFLMNAMDM), 145-165 (VVPTADLSATLGMSCGVLLLC), 187-207 (FGSHPLLYPINFAMQIIEFVA), 225-247 (LIFILIALLGSTATVFGFVGHIV), and 261-281 (TLQAFIFMMLTLVYIGQAHEG).

This sequence belongs to the ATPase A chain family. F-type ATPases have 2 components, CF(1) - the catalytic core - and CF(0) - the membrane proton channel. CF(1) has five subunits: alpha(3), beta(3), gamma(1), delta(1), epsilon(1). CF(0) has three main subunits: a(1), b(2) and c(9-12). The alpha and beta chains form an alternating ring which encloses part of the gamma chain. CF(1) is attached to CF(0) by a central stalk formed by the gamma and epsilon chains, while a peripheral stalk is formed by the delta and b chains.

The protein localises to the cell inner membrane. Its function is as follows. Key component of the proton channel; it plays a direct role in the translocation of protons across the membrane. In Azoarcus sp. (strain BH72), this protein is ATP synthase subunit a.